The following is a 446-amino-acid chain: High mobility group B protein 13 (446 aa).

2 disordered regions span residues 1–43 and 110–130; these read MSTV…TKSF and LAQT…AETK. Basic residues predominate over residues 11 to 22; sequence AKKSRNSRKALK. 2 DNA-binding regions (HMG box) span residues 129 to 197 and 246 to 312; these read TKRP…TKEK and PKQP…EGYK. Residues 349–371 show a composition bias toward basic and acidic residues; it reads NIIKKTKETAKNKKKNENVDPNK. Positions 349–377 are disordered; the sequence is NIIKKTKETAKNKKKNENVDPNKPKKPTS. Positions 372–440 form a DNA-binding region, HMG box 3; sequence PKKPTSSYFL…AYKKEVEEYN (69 aa).

It belongs to the HMGB family.

The protein localises to the nucleus. This is High mobility group B protein 13 (HMGB13) from Arabidopsis thaliana (Mouse-ear cress).